We begin with the raw amino-acid sequence, 143 residues long: UPF0201 protein Pars_1985 (143 aa).

Belongs to the UPF0201 family.

In Pyrobaculum arsenaticum (strain DSM 13514 / JCM 11321 / PZ6), this protein is UPF0201 protein Pars_1985.